The sequence spans 209 residues: HTH-type transcriptional repressor BepR (209 aa).

Residues 9–69 (AETREAILLA…SIIGRARFPQ (61 aa)) form the HTH tetR-type domain. The segment at residues 32–51 (TLTEIACYAGVTRGAIYFHF) is a DNA-binding region (H-T-H motif).

Represses expression of bepDE. In Brucella suis biovar 1 (strain 1330), this protein is HTH-type transcriptional repressor BepR (bepR).